Consider the following 257-residue polypeptide: Aspartate/glutamate leucyltransferase (257 aa).

It belongs to the R-transferase family. Bpt subfamily.

Its subcellular location is the cytoplasm. It carries out the reaction N-terminal L-glutamyl-[protein] + L-leucyl-tRNA(Leu) = N-terminal L-leucyl-L-glutamyl-[protein] + tRNA(Leu) + H(+). The catalysed reaction is N-terminal L-aspartyl-[protein] + L-leucyl-tRNA(Leu) = N-terminal L-leucyl-L-aspartyl-[protein] + tRNA(Leu) + H(+). Functions in the N-end rule pathway of protein degradation where it conjugates Leu from its aminoacyl-tRNA to the N-termini of proteins containing an N-terminal aspartate or glutamate. The polypeptide is Aspartate/glutamate leucyltransferase (Rhodopseudomonas palustris (strain BisB5)).